The primary structure comprises 457 residues: tRNA modification GTPase MnmE (457 aa).

Positions 22, 85, and 124 each coordinate (6S)-5-formyl-5,6,7,8-tetrahydrofolate. In terms of domain architecture, TrmE-type G spans 219–378 (GATVVIAGKP…LKEKIYDLVL (160 aa)). K(+) is bound at residue Asn229. GTP contacts are provided by residues 229–234 (NTGKSS), 248–254 (TPVPGTT), 273–276 (DTAG), and 333–336 (NKAD). Ser233 lines the Mg(2+) pocket. K(+) is bound by residues Thr248, Val250, and Thr253. Thr254 contributes to the Mg(2+) binding site. Lys457 serves as a coordination point for (6S)-5-formyl-5,6,7,8-tetrahydrofolate.

It belongs to the TRAFAC class TrmE-Era-EngA-EngB-Septin-like GTPase superfamily. TrmE GTPase family. Homodimer. Heterotetramer of two MnmE and two MnmG subunits. Requires K(+) as cofactor.

Its subcellular location is the cytoplasm. Exhibits a very high intrinsic GTPase hydrolysis rate. Involved in the addition of a carboxymethylaminomethyl (cmnm) group at the wobble position (U34) of certain tRNAs, forming tRNA-cmnm(5)s(2)U34. The chain is tRNA modification GTPase MnmE from Syntrophus aciditrophicus (strain SB).